The following is a 579-amino-acid chain: Glypican-2 (579 aa).

The first 23 residues, 1-23, serve as a signal peptide directing secretion; sequence MSALRPLLLLLLPLCPGPGPGPG. S55, S92, and S155 each carry an O-linked (Xyl...) (heparan sulfate) serine glycan. Disordered stretches follow at residues 444-468 and 485-555; these read GGSP…VPTR and ALGH…RSGG. S500 and S502 each carry an O-linked (Xyl...) (heparan sulfate) serine glycan. A compositionally biased stretch (pro residues) spans 520–529; that stretch reads PARPPRPPYP. G554 carries the GPI-anchor amidated glycine lipid modification. Residues 555–579 constitute a propeptide, removed in mature form; it reads GASIGFHTQTILILSLSALALLGPR.

This sequence belongs to the glypican family. In terms of assembly, interacts (via heparan sulfate) with PTN; this interaction promotes neurite outgrowth through binding of PTN with chondroitin sulfate of proteoglycans, thereby releasing PTPRS of chondroitin sulfate proteoglycans (CSPGs) and leading to binding with heparan sulfate of GPC2. Interacts (heparan sulfate chain) with MDK; this interaction is inhibited by heparin followed by chondroitin sulfate E; this interaction induces GPC2 clustering through heparan sulfate chain; this interaction induces neuronal cell adhesion and neurite outgrowth.

It is found in the cell membrane. It localises to the secreted. The protein localises to the extracellular space. Cell surface proteoglycan that bears heparan sulfate. May fulfill a function related to the motile behaviors of developing neurons. This chain is Glypican-2 (GPC2), found in Homo sapiens (Human).